The following is a 346-amino-acid chain: 2,5-dichlorohydroquinone reductive dechlorinase (346 aa).

In terms of domain architecture, GST N-terminal spans 43–154 (PRFELFHFVF…YLCDALSGGT (112 aa)). The region spanning 189–335 (DRRPESMQAV…AIIQWPGHPP (147 aa)) is the GST C-terminal domain.

It belongs to the GST superfamily.

The enzyme catalyses 2,5-dichlorohydroquinone + 2 glutathione = chlorohydroquinone + glutathione disulfide + chloride + H(+). It catalyses the reaction chlorohydroquinone + 2 glutathione = hydroquinone + glutathione disulfide + chloride + H(+). It participates in xenobiotic degradation; gamma-hexachlorocyclohexane degradation. Its function is as follows. Catalyzes the degradation of 2,5-dichlorohydroquinone (2,5-DCHQ) into hydroquinone (HQ) via chlorohydroquinone (CHQ). Is involved in the degradation pathway that allows S.japonicum UT26 to grow on gamma-hexachlorocyclohexane (gamma-HCH or lindane) as the sole source of carbon and energy. However, the conversion of CHQ to HQ by LinD seems not to be essential for this degradation pathway, because the conversion rate of CHQ to HQ is much lower than that of 2,5-DCHQ to CHQ. CHQ is more efficiently degraded by LinE in strain UT26. This chain is 2,5-dichlorohydroquinone reductive dechlorinase, found in Sphingobium indicum (strain DSM 16413 / CCM 7287 / MTCC 6362 / UT26 / NBRC 101211 / UT26S) (Sphingobium japonicum).